The following is a 207-amino-acid chain: Thymidylate kinase (207 aa).

9–16 (GGEGCGKS) lines the ATP pocket.

This sequence belongs to the thymidylate kinase family.

The enzyme catalyses dTMP + ATP = dTDP + ADP. Functionally, phosphorylation of dTMP to form dTDP in both de novo and salvage pathways of dTTP synthesis. The protein is Thymidylate kinase of Dehalococcoides mccartyi (strain ATCC BAA-2266 / KCTC 15142 / 195) (Dehalococcoides ethenogenes (strain 195)).